A 66-amino-acid chain; its full sequence is MQILTLLFAVLLLMLRAEPGLSLARGLPQDCERRGGFCSHKSCPPGIGRIGLCSKEDFCCRSRWYS.

The N-terminal stretch at 1-19 (MQILTLLFAVLLLMLRAEP) is a signal peptide. Residues 20–25 (GLSLAR) constitute a propeptide that is removed on maturation. 3 cysteine pairs are disulfide-bonded: Cys-31-Cys-59, Cys-38-Cys-53, and Cys-43-Cys-60.

It belongs to the beta-defensin family. Strong expression in the tongue and bone marrow. Low expression in the esophagus, trachea, lung, brain and ovary. Expressed in the ovarian stroma, but not in the ovarian follicles.

It is found in the secreted. The protein localises to the cytoplasmic granule. In terms of biological role, has bactericidal activity. The protein is Gallinacin-5 (GAL5) of Gallus gallus (Chicken).